Here is a 485-residue protein sequence, read N- to C-terminus: Glutamyl-tRNA(Gln) amidotransferase subunit A (485 aa).

Catalysis depends on charge relay system residues Lys78 and Ser153. Ser177 serves as the catalytic Acyl-ester intermediate.

This sequence belongs to the amidase family. GatA subfamily. In terms of assembly, heterotrimer of A, B and C subunits.

It carries out the reaction L-glutamyl-tRNA(Gln) + L-glutamine + ATP + H2O = L-glutaminyl-tRNA(Gln) + L-glutamate + ADP + phosphate + H(+). Functionally, allows the formation of correctly charged Gln-tRNA(Gln) through the transamidation of misacylated Glu-tRNA(Gln) in organisms which lack glutaminyl-tRNA synthetase. The reaction takes place in the presence of glutamine and ATP through an activated gamma-phospho-Glu-tRNA(Gln). The sequence is that of Glutamyl-tRNA(Gln) amidotransferase subunit A from Bacillus cereus (strain AH820).